Consider the following 276-residue polypeptide: Putative E3 ubiquitin-protein ligase SINA-like 9 (276 aa).

An RING-type zinc finger spans residues Cys38–Thr74. The interval Val88 to Asp274 is SBD. The SIAH-type zinc finger occupies Ser91–Ser149. Cys96, Cys103, His115, Cys119, Cys126, Cys131, His143, and His148 together coordinate Zn(2+).

Belongs to the SINA (Seven in absentia) family.

It catalyses the reaction S-ubiquitinyl-[E2 ubiquitin-conjugating enzyme]-L-cysteine + [acceptor protein]-L-lysine = [E2 ubiquitin-conjugating enzyme]-L-cysteine + N(6)-ubiquitinyl-[acceptor protein]-L-lysine.. It participates in protein modification; protein ubiquitination. Functionally, E3 ubiquitin-protein ligase that mediates ubiquitination and subsequent proteasomal degradation of target proteins. E3 ubiquitin ligases accept ubiquitin from an E2 ubiquitin-conjugating enzyme in the form of a thioester and then directly transfers the ubiquitin to targeted substrates. It probably triggers the ubiquitin-mediated degradation of different substrates. The protein is Putative E3 ubiquitin-protein ligase SINA-like 9 of Arabidopsis thaliana (Mouse-ear cress).